A 733-amino-acid chain; its full sequence is Catalase-peroxidase 2 (733 aa).

The interval 1-35 (MAEAETHPPIGESQTEPAESGCPMRIKPPVEGGSN) is disordered. The segment at residues 106–234 (WHAAGTYRVE…PXXPHMGLIY (129 aa)) is a cross-link (tryptophyl-tyrosyl-methioninium (Trp-Tyr) (with M-260)). H107 acts as the Proton acceptor in catalysis. A cross-link (tryptophyl-tyrosyl-methioninium (Tyr-Met) (with W-106)) is located at residues 234–260 (YVNPEGPEGNPDYLAAAIDIRETFGRM). A heme-binding site is contributed by H275.

This sequence belongs to the peroxidase family. Peroxidase/catalase subfamily. Homodimer or homotetramer. Requires heme b as cofactor. In terms of processing, formation of the three residue Trp-Tyr-Met cross-link is important for the catalase, but not the peroxidase activity of the enzyme.

The enzyme catalyses H2O2 + AH2 = A + 2 H2O. It catalyses the reaction 2 H2O2 = O2 + 2 H2O. Bifunctional enzyme with both catalase and broad-spectrum peroxidase activity. May play a role in the intracellular survival of mycobacteria. In Mycolicibacterium fortuitum (Mycobacterium fortuitum), this protein is Catalase-peroxidase 2.